The following is a 422-amino-acid chain: Steroid hormone receptor ERR1 (422 aa).

Residues 1-66 form a disordered region; it reads MSSQVVGIEP…EGAGSGEQGS (66 aa). The tract at residues 1 to 76 is repressor domain; it reads MSSQVVGIEP…GKLVLSSLPK (76 aa). Residue Lys14 forms a Glycyl lysine isopeptide (Lys-Gly) (interchain with G-Cter in SUMO) linkage. Residues Ser19 and Ser22 each carry the phosphoserine modification. The segment at residues 76–151 is a DNA-binding region (nuclear receptor); it reads KRLCLVCGDV…VGMLKEGVRL (76 aa). 2 consecutive NR C4-type zinc fingers follow at residues 79–99 and 115–134; these read CLVC…CEAC and CPAS…CQAC. N6-acetyllysine; by PCAF/KAT2B is present on residues Lys129, Lys138, Lys160, and Lys162. Lys189 is covalently cross-linked (Glycyl lysine isopeptide (Lys-Gly) (interchain with G-Cter in SUMO2)). Positions 192-420 constitute an NR LBD domain; sequence PVNALVSHLL…KLFLEMLEAM (229 aa). Lys402 is covalently cross-linked (Glycyl lysine isopeptide (Lys-Gly) (interchain with G-Cter in SUMO); alternate). Lys402 is covalently cross-linked (Glycyl lysine isopeptide (Lys-Gly) (interchain with G-Cter in SUMO2); alternate). The segment at 402-422 is AF-2 domain; it reads KLEGKVPMHKLFLEMLEAMMD.

The protein belongs to the nuclear hormone receptor family. NR3 subfamily. Binds DNA as a monomer or a homodimer. Interacts (via the AF2 domain) with coactivator PPARGC1A (via the L3 motif); the interaction greatly enhances transcriptional activity of genes involved in energy metabolism. Interacts with PIAS4; the interaction enhances sumoylation. Interacts with MAPK15; promotes re-localization of ESRRA to the cytoplasm through a XPO1-dependent mechanism then inhibits ESRRA transcriptional activity. In terms of processing, phosphorylation on Ser-19 enhances sumoylation on Lys-14 increasing repression of transcriptional activity. Sumoylated with SUMO2. Main site is Lys-14 which is enhanced by phosphorylation on Ser-19, cofactor activation, and by interaction with PIAS4. Sumoylation enhances repression of transcriptional activity, but has no effect on subcellular location nor on DNA binding. Post-translationally, reversibly acetylated. Acetylation by PCAF/KAT2 at Lys-129, Lys-138, Lys-160 and Lys-162 and PCAF/KAT2 decreases transcriptional activity probably by inhibiting DNA-binding activity; deacetylation involves SIRT1 and HDAC8 and increases DNA-binding. Most highly expressed in kidney, heart, and brown adipocytes. Also found in uterus, cervix and vagina.

The protein localises to the nucleus. It is found in the cytoplasm. Its function is as follows. Binds to an ERR-alpha response element (ERRE) containing a single consensus half-site, 5'-TNAAGGTCA-3'. Can bind to the medium-chain acyl coenzyme A dehydrogenase (MCAD) response element NRRE-1 and may act as an important regulator of MCAD promoter. Binds to the C1 region of the lactoferrin gene promoter. Requires dimerization and the coactivator, PGC-1A, for full activity. The ERRalpha/PGC1alpha complex is a regulator of energy metabolism. Induces the expression of PERM1 in the skeletal muscle. The polypeptide is Steroid hormone receptor ERR1 (Esrra) (Mus musculus (Mouse)).